The chain runs to 1078 residues: MTMTTTNYGADQIQVLEGLEPVRKRPGMYIGSTGPKGLHHLVYEVVDNAIDEALAGYCTHIEIDINADGSVTVVDNGRGIPTDIHPTTGRSALETVLTVLHAGGKFGGGGYKVSGGLHGVGVSVVNALSEWVEVKVWRQGKEHFQRFERGNPIGTLEATPNEGHSTGTQVSFLPDTQIFKDGIEFDYHTLASRLKELAYLNAGVRITFGDRRADSLKEEQFYYEGGIREYVTYMTTDKTPLHEEIIYTSGEKNDVQVEVALQWCVDAYSDTLLGFANNIRTIDGGTHLEGLKAVLTRTLNSVARKRNKLKDGDSNLGGENIREGLTGVISVKVPDPEFEGQTKTKLGNTEVRGIVDTLVGEALTEFLEFNPGVADAIIEKAVQAFKAAEAARRARELVRRKSVLESSTLPGKLADCSSKDPSESEIFIVEGDSAGGCFSGDTLVALTDGRSVSFEQLVEEEKQGKQNFCYTIRHDGSIGVEKIINARKTKTNAKVIKVTLDNGESIICTPDHKFMLRDGSYKCAMDLTLDDSLMPLHRKISTTEDSGITIDGYEMVWSPRSDSWLFTHLVADWYNRWQGIYIAEEKQHCHHKDFNKRNNNPDNLIRLSPEKHLALHRKHISKTLHRPDVVEKCRRIHQSPEFRRKMSARMQSPETRAILSKQAQAQWQNETYKLTMMESWRSFYDSNEDYRQQNAEQLNRAQQEYWAQAENRTAQAERVRQHFAQNPGLRQQYSENAVKQWNNPELLKWRQKKTKEQWTPEFREKRREALAQTYYRKTLAALKQVEIENGYLDISAYDSYRISTKDKSLLRFDRFCERYFENDENLAREAVLNYNHRIVNIEAVSETIDVYDIEVPHTHNFALASGVFVHNSAKQGRDRRFQAILPLRGKILNIEKTDDAKIYKNTEIQALITALGLGIKGDDFDISSLRYHRVVIMTDADVDGAHIRTLLLTFFYRYQRDLVDQGYIYIACPPLYKLERGKNHFYCYSDRELQEQISQFPPNANYTIQRFKGLGEMMPQQLWDTTMNPESRTMKRVHIEDAAEADRIFTVLMGDRVAPRREFIETYGTKLDLTDLDI.

The 86-residue stretch at 889–974 (GKILNIEKTD…QGYIYIACPP (86 aa)) folds into the Toprim domain. Glu895, Asp939, and Asp941 together coordinate Mg(2+).

This sequence belongs to the type II topoisomerase GyrB family. As to quaternary structure, heterotetramer, composed of two GyrA and two GyrB chains. In the heterotetramer, GyrA contains the active site tyrosine that forms a transient covalent intermediate with DNA, while GyrB binds cofactors and catalyzes ATP hydrolysis. Mg(2+) is required as a cofactor. This protein undergoes a protein self splicing that involves a post-translational excision of the intervening region (intein) followed by peptide ligation.

It is found in the cytoplasm. It carries out the reaction ATP-dependent breakage, passage and rejoining of double-stranded DNA.. Functionally, a type II topoisomerase that negatively supercoils closed circular double-stranded (ds) DNA in an ATP-dependent manner to modulate DNA topology and maintain chromosomes in an underwound state. Negative supercoiling favors strand separation, and DNA replication, transcription, recombination and repair, all of which involve strand separation. Also able to catalyze the interconversion of other topological isomers of dsDNA rings, including catenanes and knotted rings. Type II topoisomerases break and join 2 DNA strands simultaneously in an ATP-dependent manner. The sequence is that of DNA gyrase subunit B (gyrB) from Synechocystis sp. (strain ATCC 27184 / PCC 6803 / Kazusa).